The primary structure comprises 295 residues: Acetylglutamate kinase (295 aa).

Substrate-binding positions include 61-62 (GG), Arg-83, and Asn-182.

Belongs to the acetylglutamate kinase family. ArgB subfamily.

Its subcellular location is the cytoplasm. It catalyses the reaction N-acetyl-L-glutamate + ATP = N-acetyl-L-glutamyl 5-phosphate + ADP. The protein operates within amino-acid biosynthesis; L-arginine biosynthesis; N(2)-acetyl-L-ornithine from L-glutamate: step 2/4. In terms of biological role, catalyzes the ATP-dependent phosphorylation of N-acetyl-L-glutamate. The polypeptide is Acetylglutamate kinase (Clostridium acetobutylicum (strain ATCC 824 / DSM 792 / JCM 1419 / IAM 19013 / LMG 5710 / NBRC 13948 / NRRL B-527 / VKM B-1787 / 2291 / W)).